A 130-amino-acid polypeptide reads, in one-letter code: Small ribosomal subunit protein uS9 (130 aa).

This sequence belongs to the universal ribosomal protein uS9 family.

The chain is Small ribosomal subunit protein uS9 from Buchnera aphidicola subsp. Acyrthosiphon pisum (strain 5A).